Here is a 399-residue protein sequence, read N- to C-terminus: Nuclear hormone receptor family member nhr-125 (399 aa).

The segment at residues 10-80 is a DNA-binding region (nuclear receptor); sequence PFSCRICNQK…MGMDTTKFQY (71 aa). 2 consecutive NR C4-type zinc fingers follow at residues 13–33 and 50–63; these read CRIC…CRAC and CQKG…CKRC. In terms of domain architecture, NR LBD spans 149–392; sequence QLENLTEGFK…EKLQKSQFSI (244 aa).

It belongs to the nuclear hormone receptor family.

Its subcellular location is the nucleus. Functionally, orphan nuclear receptor. This chain is Nuclear hormone receptor family member nhr-125 (nhr-125), found in Caenorhabditis elegans.